The sequence spans 311 residues: L-lactate dehydrogenase 2 (311 aa).

Residues valine 14, aspartate 35, and arginine 40 each contribute to the NAD(+) site. Substrate-binding positions include arginine 90 and 122 to 125; that span reads NPCD. NAD(+) contacts are provided by residues 120–122 and threonine 145; that span reads ATN. Residue 150–153 coordinates substrate; that stretch reads DTTR. The active-site Proton acceptor is histidine 177. Threonine 230 serves as a coordination point for substrate.

The protein belongs to the LDH/MDH superfamily. LDH family. In terms of assembly, homotetramer.

Its subcellular location is the cytoplasm. It catalyses the reaction (S)-lactate + NAD(+) = pyruvate + NADH + H(+). It participates in fermentation; pyruvate fermentation to lactate; (S)-lactate from pyruvate: step 1/1. Catalyzes the conversion of lactate to pyruvate. In Listeria monocytogenes serovar 1/2a (strain ATCC BAA-679 / EGD-e), this protein is L-lactate dehydrogenase 2.